A 271-amino-acid chain; its full sequence is Putative carboxymethylenebutenolidase (271 aa).

Active-site residues include C147, D204, and H236.

The protein belongs to the dienelactone hydrolase family.

The catalysed reaction is 2-(5-oxo-2,5-dihydrofuran-2-ylidene)acetate + H2O = 4-oxohex-2-enedioate + H(+). The protein is Putative carboxymethylenebutenolidase (ysgA) of Escherichia coli (strain K12).